A 152-amino-acid polypeptide reads, in one-letter code: Xanthine-guanine phosphoribosyltransferase (152 aa).

5-phospho-alpha-D-ribose 1-diphosphate contacts are provided by residues 37–38, Arg69, and 88–96; these read RG and DDLVDTGGT. Arg69 serves as a coordination point for GMP. Asp89 contacts Mg(2+). Asp92 and Ile135 together coordinate guanine. Residues Asp92 and Ile135 each coordinate xanthine. GMP-binding positions include 92 to 96 and 134 to 135; these read DTGGT and WI.

Belongs to the purine/pyrimidine phosphoribosyltransferase family. XGPT subfamily. As to quaternary structure, homotetramer. It depends on Mg(2+) as a cofactor.

It is found in the cell inner membrane. The enzyme catalyses GMP + diphosphate = guanine + 5-phospho-alpha-D-ribose 1-diphosphate. It catalyses the reaction XMP + diphosphate = xanthine + 5-phospho-alpha-D-ribose 1-diphosphate. It carries out the reaction IMP + diphosphate = hypoxanthine + 5-phospho-alpha-D-ribose 1-diphosphate. It functions in the pathway purine metabolism; GMP biosynthesis via salvage pathway; GMP from guanine: step 1/1. Its pathway is purine metabolism; XMP biosynthesis via salvage pathway; XMP from xanthine: step 1/1. In terms of biological role, purine salvage pathway enzyme that catalyzes the transfer of the ribosyl-5-phosphate group from 5-phospho-alpha-D-ribose 1-diphosphate (PRPP) to the N9 position of the 6-oxopurines guanine and xanthine to form the corresponding ribonucleotides GMP (guanosine 5'-monophosphate) and XMP (xanthosine 5'-monophosphate), with the release of PPi. To a lesser extent, also acts on hypoxanthine. In Escherichia coli O7:K1 (strain IAI39 / ExPEC), this protein is Xanthine-guanine phosphoribosyltransferase.